A 300-amino-acid polypeptide reads, in one-letter code: ATP-dependent (S)-NAD(P)H-hydrate dehydratase (300 aa).

The YjeF C-terminal domain maps to 14–293 (LLALFKTVVP…NQIPSVFQTE (280 aa)). (6S)-NADPHX contacts are provided by residues G114 and 167 to 173 (NVMEFQR). ATP is bound by residues 198 to 202 (KGAND) and 219 to 228 (GSGRRCGGQG). D229 contacts (6S)-NADPHX.

It belongs to the NnrD/CARKD family. Mg(2+) serves as cofactor.

The catalysed reaction is (6S)-NADHX + ATP = ADP + phosphate + NADH + H(+). It carries out the reaction (6S)-NADPHX + ATP = ADP + phosphate + NADPH + H(+). Its function is as follows. Catalyzes the dehydration of the S-form of NAD(P)HX at the expense of ATP, which is converted to ADP. Together with NAD(P)HX epimerase, which catalyzes the epimerization of the S- and R-forms, the enzyme allows the repair of both epimers of NAD(P)HX, a damaged form of NAD(P)H that is a result of enzymatic or heat-dependent hydration. This is ATP-dependent (S)-NAD(P)H-hydrate dehydratase from Drosophila melanogaster (Fruit fly).